The chain runs to 278 residues: Putative cysteine-rich repeat secretory protein 17 (278 aa).

Residues Met1–Ser32 form the signal peptide. Gnk2-homologous domains lie at Tyr39–Asn142 and Tyr148–Phe265.

The protein belongs to the cysteine-rich repeat secretory protein family.

It is found in the secreted. This Arabidopsis thaliana (Mouse-ear cress) protein is Putative cysteine-rich repeat secretory protein 17 (CRRSP17).